The chain runs to 82 residues: Cortexin-1 (82 aa).

Residues 1–20 (MSSAWTLSPEPLPPSTGPPV) are disordered. The helical transmembrane segment at 30-50 (TVFAFVLCLLVVLVLLMVRCV) threads the bilayer.

Belongs to the cortexin family.

It localises to the membrane. May mediate extracellular or intracellular signaling of cortical neurons during forebrain development. This Mus musculus (Mouse) protein is Cortexin-1 (Ctxn1).